We begin with the raw amino-acid sequence, 153 residues long: 6,7-dimethyl-8-ribityllumazine synthase 1 (153 aa).

Residues Phe16, Ala47–Glu49, and Met76–Ile78 each bind 5-amino-6-(D-ribitylamino)uracil. Glu81–Thr82 contacts (2S)-2-hydroxy-3-oxobutyl phosphate. His84 functions as the Proton donor in the catalytic mechanism. Asn109 contributes to the 5-amino-6-(D-ribitylamino)uracil binding site. Arg123 contacts (2S)-2-hydroxy-3-oxobutyl phosphate.

It belongs to the DMRL synthase family.

It carries out the reaction (2S)-2-hydroxy-3-oxobutyl phosphate + 5-amino-6-(D-ribitylamino)uracil = 6,7-dimethyl-8-(1-D-ribityl)lumazine + phosphate + 2 H2O + H(+). Its pathway is cofactor biosynthesis; riboflavin biosynthesis; riboflavin from 2-hydroxy-3-oxobutyl phosphate and 5-amino-6-(D-ribitylamino)uracil: step 1/2. Its function is as follows. Catalyzes the formation of 6,7-dimethyl-8-ribityllumazine by condensation of 5-amino-6-(D-ribitylamino)uracil with 3,4-dihydroxy-2-butanone 4-phosphate. This is the penultimate step in the biosynthesis of riboflavin. In Rhizobium meliloti (strain 1021) (Ensifer meliloti), this protein is 6,7-dimethyl-8-ribityllumazine synthase 1.